Here is a 297-residue protein sequence, read N- to C-terminus: ATP synthase subunit a (297 aa).

A run of 8 helical transmembrane segments spans residues 38 to 58 (PLIP…IAIL), 77 to 97 (GYVL…VDLL), 107 to 127 (LFII…VGGI), 133 to 153 (SSTV…IMGV), 174 to 194 (TIPL…LLSI), 202 to 222 (VLAG…FFTL), 230 to 250 (VGLV…HVYF), and 252 to 272 (ILVS…YWSQ).

Belongs to the ATPase A chain family. In terms of assembly, F-type ATPases have 2 components, CF(1) - the catalytic core - and CF(0) - the membrane proton channel. CF(1) has five subunits: alpha(3), beta(3), gamma(1), delta(1), epsilon(1). CF(0) has three main subunits: a(1), b(2) and c(9-12). The alpha and beta chains form an alternating ring which encloses part of the gamma chain. CF(1) is attached to CF(0) by a central stalk formed by the gamma and epsilon chains, while a peripheral stalk is formed by the delta and b chains.

The protein resides in the cell membrane. Key component of the proton channel; it plays a direct role in the translocation of protons across the membrane. This Mycoplasmoides gallisepticum (strain R(low / passage 15 / clone 2)) (Mycoplasma gallisepticum) protein is ATP synthase subunit a.